Consider the following 1628-residue polypeptide: Lysine-specific histone demethylase 1 homolog 3 (1628 aa).

The interval 1–71 (MDGKEKKSGS…KKLSALGKDS (71 aa)) is disordered. Acidic residues predominate over residues 19–28 (FDDDADDDEP). A compositionally biased stretch (basic and acidic residues) spans 43–64 (KDKVETESTGKQRQKQVVEKKL). Residues 378 to 478 (GRAAAVTAGL…AGISSVNGKA (101 aa)) form the SWIRM domain. The FAD site is built by glutamate 647, arginine 649, arginine 655, and glutamate 1077. Residues 1271-1317 (SGKKSLRQANTTNTSRIRRKLNSPDTDSKGKLSNGNDVKTDEEFEDN) are disordered.

It belongs to the flavin monoamine oxidase family. The cofactor is FAD.

Functionally, probable histone demethylase that reduces the levels of histone H3 'Lys-4' methylation in chromatin. The chain is Lysine-specific histone demethylase 1 homolog 3 (LDL3) from Arabidopsis thaliana (Mouse-ear cress).